Consider the following 351-residue polypeptide: Cyanuric acid amidohydrolase (351 aa).

Residues 1–96 are RU A; that stretch reads MPSLRAHVFR…HWTVFARETV (96 aa). Residues arginine 53 and 77 to 78 contribute to the substrate site; that span reads SG. Residues 103–240 are RU B; it reads ALAIGVSRTP…HEIIVLGMSA (138 aa). The active site involves lysine 153. Residues arginine 185 and 223–224 contribute to the substrate site; that span reads SS. Serine 223 serves as the catalytic Nucleophile. Residues 246-351 form an RU C region; the sequence is LSIDHAVMRD…PVAIIVEKEQ (106 aa). Mg(2+) is bound at residue glutamate 283. Substrate is bound by residues arginine 310 and 329–330; that span reads SG. Mg(2+) is bound by residues alanine 332, glutamine 335, glycine 336, proline 337, and glycine 340.

Belongs to the cyclic amide hydrolase (CyAH) family. As to quaternary structure, homotetramer.

The catalysed reaction is cyanurate + H2O = 1-carboxybiuret + H(+). It participates in xenobiotic degradation; atrazine degradation; biuret from cyanurate: step 1/1. Its activity is regulated as follows. Inhibited by barbituric acid. Its function is as follows. Responsible for the hydrolysis of cyanuric acid, an intermediate formed during catabolism of s-triazine based compounds in herbicides such as atrazine and polymers such as melamine. Catalyzes the hydrolytic opening of the s-triazine ring of cyanuric acid (2,4,6-trihydroxy-s-triazine) to yield carbon dioxide and carboxybiuret, which spontaneously decarboxylates to biuret. The protein is Cyanuric acid amidohydrolase of Rhizobium johnstonii (strain DSM 114642 / LMG 32736 / 3841) (Rhizobium leguminosarum bv. viciae).